A 232-amino-acid chain; its full sequence is MENQPKLNSSKEVIAFLAERFPHCFSAEGEARPLKIGIFQDLVDRVAGEMNLSKTQLRSALRLYTSSWRYLYGVKPGTTRVDLDGNPCGELDEQHVEHARKQLEEAKARVQAQRAEQQAKKREAAAAAGEKEDAPRRERKPRPTTPRRKEGAERKPRAQKPVEKAPKTVKAPREEQHTPVSDISALTVGQALKVKAGQNAMDATVLEITKDGVRVQLNSGMSLIVRAEHLVF.

Residues 105 to 182 (EAKARVQAQR…REEQHTPVSD (78 aa)) are disordered. Positions 117 to 136 (QQAKKREAAAAAGEKEDAPR) are enriched in basic and acidic residues. Over residues 137–146 (RERKPRPTTP) the composition is skewed to basic residues. Residues 147–177 (RRKEGAERKPRAQKPVEKAPKTVKAPREEQH) show a composition bias toward basic and acidic residues.

It belongs to the ProQ family.

It is found in the cytoplasm. In terms of biological role, RNA chaperone with significant RNA binding, RNA strand exchange and RNA duplexing activities. May regulate ProP activity through an RNA-based, post-transcriptional mechanism. The protein is RNA chaperone ProQ of Shigella boydii serotype 18 (strain CDC 3083-94 / BS512).